The chain runs to 329 residues: Taste receptor type 2 member 102 (329 aa).

At 1–9 (MNMESVLHN) the chain is on the extracellular side. A helical membrane pass occupies residues 10 to 30 (FATVLIYVEFIFGNLSNGFIV). Residues 31 to 47 (LSNFLDWVIKQKLSLID) are Cytoplasmic-facing. A helical transmembrane segment spans residues 48–68 (KILLTLAISRITLIWEIYAWF). The Extracellular portion of the chain corresponds to 69–85 (KSLYDPSSFLIGIEFQI). A helical transmembrane segment spans residues 86–108 (IYFSWVLSSHFSLWLATTLSVFY). Residues 109–129 (LLRIANCSWQIFLYLKWRLKQ) lie on the Cytoplasmic side of the membrane. A helical transmembrane segment spans residues 130-150 (LIVGMLLGSLVFLLGNLMQSM). Residues 151–181 (LEERFYQYGRNTSVNTMSNDLAMWTELIFFN) lie on the Extracellular side of the membrane. N-linked (GlcNAc...) asparagine glycosylation occurs at Asn161. A helical membrane pass occupies residues 182 to 202 (MAMFSVIPFTLALISFLLLIF). At 203–231 (SLWKHLQKMQLISRRHRDPSTKAHMNALR) the chain is on the cytoplasmic side. The helical transmembrane segment at 232-252 (IMVSFLLLYTMHFLSLLISWI) threads the bilayer. At 253–262 (AQKHQSELAD) the chain is on the extracellular side. Residues 263-283 (IIGMITELMYPSVHSCILILG) form a helical membrane-spanning segment. Over 284 to 329 (NSKLKQTSLCMLRHLRCRLKGENITIAYSNQITSFCVFCVANKSMR) the chain is Cytoplasmic.

This sequence belongs to the G-protein coupled receptor T2R family.

It localises to the membrane. Its function is as follows. Putative taste receptor which may play a role in the perception of bitterness. The protein is Taste receptor type 2 member 102 of Mus musculus (Mouse).